We begin with the raw amino-acid sequence, 242 residues long: Probable transcriptional regulatory protein STH1004 (242 aa).

It belongs to the TACO1 family.

Its subcellular location is the cytoplasm. The protein is Probable transcriptional regulatory protein STH1004 of Symbiobacterium thermophilum (strain DSM 24528 / JCM 14929 / IAM 14863 / T).